A 703-amino-acid chain; its full sequence is Probable ATP-dependent RNA helicase DHX35 (703 aa).

The Helicase ATP-binding domain occupies 64–229 (LYLIENYQTV…FNQNETSDPA (166 aa)). An ATP-binding site is contributed by 77-84 (GETGCGKS). The DEAH box signature appears at 176–179 (DEAH). One can recognise a Helicase C-terminal domain in the interval 261 to 438 (TVETVVKIHQ…PVILQLKALG (178 aa)).

Belongs to the DEAD box helicase family. DEAH subfamily. Identified in the spliceosome C complex.

The enzyme catalyses ATP + H2O = ADP + phosphate + H(+). In terms of biological role, may be involved in pre-mRNA splicing. The protein is Probable ATP-dependent RNA helicase DHX35 (DHX35) of Homo sapiens (Human).